The sequence spans 119 residues: NAD(P)H-quinone oxidoreductase subunit M (119 aa).

Belongs to the complex I NdhM subunit family. NDH-1 can be composed of about 15 different subunits; different subcomplexes with different compositions have been identified which probably have different functions.

The protein localises to the cell inner membrane. The catalysed reaction is a plastoquinone + NADH + (n+1) H(+)(in) = a plastoquinol + NAD(+) + n H(+)(out). It carries out the reaction a plastoquinone + NADPH + (n+1) H(+)(in) = a plastoquinol + NADP(+) + n H(+)(out). Its function is as follows. NDH-1 shuttles electrons from an unknown electron donor, via FMN and iron-sulfur (Fe-S) centers, to quinones in the respiratory and/or the photosynthetic chain. The immediate electron acceptor for the enzyme in this species is believed to be plastoquinone. Couples the redox reaction to proton translocation, and thus conserves the redox energy in a proton gradient. Cyanobacterial NDH-1 also plays a role in inorganic carbon-concentration. In Gloeobacter violaceus (strain ATCC 29082 / PCC 7421), this protein is NAD(P)H-quinone oxidoreductase subunit M.